The chain runs to 382 residues: Dual-specificity RNA methyltransferase RlmN (382 aa).

Glu95 acts as the Proton acceptor in catalysis. The region spanning Glu101–Asp349 is the Radical SAM core domain. Cys108 and Cys354 are oxidised to a cystine. [4Fe-4S] cluster-binding residues include Cys115, Cys119, and Cys122. S-adenosyl-L-methionine is bound by residues Gly180 to Glu181, Ser212, Ser234 to His236, and Asn311. The active-site S-methylcysteine intermediate is Cys354.

Belongs to the radical SAM superfamily. RlmN family. [4Fe-4S] cluster serves as cofactor.

Its subcellular location is the cytoplasm. The enzyme catalyses adenosine(2503) in 23S rRNA + 2 reduced [2Fe-2S]-[ferredoxin] + 2 S-adenosyl-L-methionine = 2-methyladenosine(2503) in 23S rRNA + 5'-deoxyadenosine + L-methionine + 2 oxidized [2Fe-2S]-[ferredoxin] + S-adenosyl-L-homocysteine. It carries out the reaction adenosine(37) in tRNA + 2 reduced [2Fe-2S]-[ferredoxin] + 2 S-adenosyl-L-methionine = 2-methyladenosine(37) in tRNA + 5'-deoxyadenosine + L-methionine + 2 oxidized [2Fe-2S]-[ferredoxin] + S-adenosyl-L-homocysteine. Its function is as follows. Specifically methylates position 2 of adenine 2503 in 23S rRNA and position 2 of adenine 37 in tRNAs. m2A2503 modification seems to play a crucial role in the proofreading step occurring at the peptidyl transferase center and thus would serve to optimize ribosomal fidelity. This is Dual-specificity RNA methyltransferase RlmN from Paraburkholderia phymatum (strain DSM 17167 / CIP 108236 / LMG 21445 / STM815) (Burkholderia phymatum).